A 134-amino-acid polypeptide reads, in one-letter code: L-ectoine synthase (134 aa).

The protein belongs to the ectoine synthase family.

The catalysed reaction is (2S)-4-acetamido-2-aminobutanoate = L-ectoine + H2O. It functions in the pathway amine and polyamine biosynthesis; ectoine biosynthesis; L-ectoine from L-aspartate 4-semialdehyde: step 3/3. Its function is as follows. Catalyzes the circularization of gamma-N-acetyl-alpha,gamma-diaminobutyric acid (ADABA) to ectoine (1,4,5,6-tetrahydro-2-methyl-4-pyrimidine carboxylic acid), which is an excellent osmoprotectant. The sequence is that of L-ectoine synthase from Shouchella clausii (strain KSM-K16) (Alkalihalobacillus clausii).